The following is a 279-amino-acid chain: Cholesterol 25-hydroxylase-like protein 2 (279 aa).

N6 and N13 each carry an N-linked (GlcNAc...) asparagine glycan. 3 consecutive transmembrane segments span residues 36–56, 86–106, and 120–140; these read LFPV…YTVL, LALT…AQWL, and LTAF…QYYL. Positions 128–262 constitute a Fatty acid hydroxylase domain; that stretch reads VGCTVVFDFQ…FAHWDWLGGT (135 aa). The Histidine box-1 motif lies at 141-145; that stretch reads WHLLH. The Histidine box-2 motif lies at 156-160; sequence HALHH. A run of 2 transmembrane segments spans residues 165 to 185 and 189 to 209; these read TFSL…GFWT and PLLL…NIWV. Residues 237-243 carry the Histidine box-3 motif; it reads RHDAHHQ.

The protein belongs to the sterol desaturase family. Fe cation serves as cofactor.

The protein resides in the endoplasmic reticulum membrane. Functionally, may catalyze the formation of 25-hydroxycholesterol from cholesterol. This chain is Cholesterol 25-hydroxylase-like protein 2, found in Danio rerio (Zebrafish).